Reading from the N-terminus, the 229-residue chain is 23 kDa piroplasm membrane protein (229 aa).

An N-terminal signal peptide occupies residues 1 to 19 (MNKYFKVFFFVLLTHALKS). The Extracellular segment spans residues 20-203 (ALIFGQATLQ…EKEDTNKKKY (184 aa)). The helical transmembrane segment at 204–224 (VLMVVVVVVFVVVASLVVFLV) threads the bilayer. The Cytoplasmic portion of the chain corresponds to 225–229 (KFCLK).

It is found in the membrane. The chain is 23 kDa piroplasm membrane protein from Theileria parva (East coast fever infection agent).